The sequence spans 181 residues: Large ribosomal subunit protein uL10 (181 aa).

It belongs to the universal ribosomal protein uL10 family. Part of the ribosomal stalk of the 50S ribosomal subunit. The N-terminus interacts with L11 and the large rRNA to form the base of the stalk. The C-terminus forms an elongated spine to which L12 dimers bind in a sequential fashion forming a multimeric L10(L12)X complex.

Its function is as follows. Forms part of the ribosomal stalk, playing a central role in the interaction of the ribosome with GTP-bound translation factors. This is Large ribosomal subunit protein uL10 from Chloroflexus aggregans (strain MD-66 / DSM 9485).